Consider the following 123-residue polypeptide: Large ribosomal subunit protein uL14 (123 aa).

It belongs to the universal ribosomal protein uL14 family. Part of the 50S ribosomal subunit. Forms a cluster with proteins L3 and L19. In the 70S ribosome, L14 and L19 interact and together make contacts with the 16S rRNA in bridges B5 and B8.

In terms of biological role, binds to 23S rRNA. Forms part of two intersubunit bridges in the 70S ribosome. The protein is Large ribosomal subunit protein uL14 of Actinobacillus pleuropneumoniae serotype 7 (strain AP76).